A 166-amino-acid polypeptide reads, in one-letter code: 3-isopropylmalate dehydratase small subunit (166 aa).

This sequence belongs to the LeuD family. LeuD type 2 subfamily. In terms of assembly, heterodimer of LeuC and LeuD.

It carries out the reaction (2R,3S)-3-isopropylmalate = (2S)-2-isopropylmalate. It participates in amino-acid biosynthesis; L-leucine biosynthesis; L-leucine from 3-methyl-2-oxobutanoate: step 2/4. Catalyzes the isomerization between 2-isopropylmalate and 3-isopropylmalate, via the formation of 2-isopropylmaleate. In Caldicellulosiruptor bescii (strain ATCC BAA-1888 / DSM 6725 / KCTC 15123 / Z-1320) (Anaerocellum thermophilum), this protein is 3-isopropylmalate dehydratase small subunit.